The sequence spans 892 residues: MEINHDYRVKLFDELGFERKQCTECNQWFWTLDKDRTTCGDSPCDEYSFIGSPITSKKYTYNEMVKEFTNFFAEKGHSPVKRSPVVAKRWRDDILLTIASIAVFQPWVTSGLVKPVKNPLVIAQPCIRLNDIDNVGRTGRHLTCFTMGAHHAFNSKDEYKYWTDKTVEYCFELMKRLGIDEKTVTFIESWWEGGGNAGPCYEVITHGVELATLVFMQYKKVGNDYEEIPLKIVDTGYGIERFAWASQGTPTVYESLFSEVIEKLKKDAGIPEVDEKIMAESATLAGLMDIENVGDLRVLRQKVAEKIGMDVDELDKLISPLEYIYAIADHTRCLSFMFGDGIVPSNVKEGYLARLVLRKTLRYMEKIGISMSIKDIIAMQLENMKEIYPELSEMKEYIMDVLDSEEKKYIQTVNRGRGIVERMAVSKSEITLDDLIELYDSNGIPPEIVKDVVDEINKKGKKTIAITVPDNFYTIVAERHEEEKPEEVVSTKKELPELEVSETELLFFKHPTQVEFEAKVLKTVEKYVLLDKTLFYAEGGGQKYDIGQLNGIEVSDVQKKNGIVFHKVSDISKFKEGDTVKGTLNWENRLKLMRNHTATHVINAAATRVLGKHIWQTGSNVDTEKGRLDITHYERISREQVKEIERIANEIVLSKMPVNSTFMDRNDSEQKYGFTIYQGGVVPGDTLRIIEIEGTDVEACGGTHCSNTSEVGYIKVLKTERIQDGVERLEYSTGMGSVSEIAVLEDILIDSAEILGIPNDQLPKTVKRFFEEWKEQKKTIEELQKKVGELVKYELADKFEKHGDYEVLVEQVSGTPNELMSIADNLAIGNKLIVLMNENDYLLCKRGENVELSMKELIRNIGKGGGKDNLAQGKYSETKEQITEKISQILNK.

Positions 596, 600, 700, and 704 each coordinate Zn(2+).

The protein belongs to the class-II aminoacyl-tRNA synthetase family. Zn(2+) serves as cofactor.

Its subcellular location is the cytoplasm. The catalysed reaction is tRNA(Ala) + L-alanine + ATP = L-alanyl-tRNA(Ala) + AMP + diphosphate. Its function is as follows. Catalyzes the attachment of alanine to tRNA(Ala) in a two-step reaction: alanine is first activated by ATP to form Ala-AMP and then transferred to the acceptor end of tRNA(Ala). Also edits incorrectly charged Ser-tRNA(Ala) and Gly-tRNA(Ala) via its editing domain. The chain is Alanine--tRNA ligase from Methanococcus maripaludis (strain C5 / ATCC BAA-1333).